A 461-amino-acid chain; its full sequence is Alpha-L-fucosidase (461 aa).

Residues 1-18 form the signal peptide; sequence MKMIIIFFILLILNLIKS.

Belongs to the glycosyl hydrolase 29 family.

It carries out the reaction an alpha-L-fucoside + H2O = L-fucose + an alcohol. Functionally, alpha-L-fucosidase is responsible for hydrolyzing the alpha-1,6-linked fucose joined to the reducing-end N-acetylglucosamine of the carbohydrate moieties of glycoproteins. The chain is Alpha-L-fucosidase (alfA) from Dictyostelium discoideum (Social amoeba).